Here is a 168-residue protein sequence, read N- to C-terminus: Lipoprotein signal peptidase (168 aa).

3 consecutive transmembrane segments (helical) span residues 8 to 28 (TLLV…VVLL), 70 to 90 (KYFL…YLFF), and 104 to 124 (VLLC…GHIV). Catalysis depends on residues Asp-125 and Asp-143. A helical membrane pass occupies residues 134 to 154 (WAFPTFNVADVLISLGTLLLV).

Belongs to the peptidase A8 family.

It localises to the cell inner membrane. It carries out the reaction Release of signal peptides from bacterial membrane prolipoproteins. Hydrolyzes -Xaa-Yaa-Zaa-|-(S,diacylglyceryl)Cys-, in which Xaa is hydrophobic (preferably Leu), and Yaa (Ala or Ser) and Zaa (Gly or Ala) have small, neutral side chains.. It functions in the pathway protein modification; lipoprotein biosynthesis (signal peptide cleavage). In terms of biological role, this protein specifically catalyzes the removal of signal peptides from prolipoproteins. This Chlamydia pneumoniae (Chlamydophila pneumoniae) protein is Lipoprotein signal peptidase.